A 343-amino-acid polypeptide reads, in one-letter code: Anthranilate phosphoribosyltransferase (343 aa).

Residues glycine 79, 82 to 83 (GD), threonine 87, 89 to 92 (NVST), 106 to 114 (KHGNRAASS), and serine 118 each bind 5-phospho-alpha-D-ribose 1-diphosphate. Glycine 79 serves as a coordination point for anthranilate. A Mg(2+)-binding site is contributed by serine 91. Asparagine 109 is a binding site for anthranilate. Arginine 164 contacts anthranilate. 2 residues coordinate Mg(2+): aspartate 223 and glutamate 224.

The protein belongs to the anthranilate phosphoribosyltransferase family. Homodimer. Mg(2+) serves as cofactor.

The enzyme catalyses N-(5-phospho-beta-D-ribosyl)anthranilate + diphosphate = 5-phospho-alpha-D-ribose 1-diphosphate + anthranilate. It functions in the pathway amino-acid biosynthesis; L-tryptophan biosynthesis; L-tryptophan from chorismate: step 2/5. In terms of biological role, catalyzes the transfer of the phosphoribosyl group of 5-phosphorylribose-1-pyrophosphate (PRPP) to anthranilate to yield N-(5'-phosphoribosyl)-anthranilate (PRA). This is Anthranilate phosphoribosyltransferase from Metallosphaera sedula (strain ATCC 51363 / DSM 5348 / JCM 9185 / NBRC 15509 / TH2).